We begin with the raw amino-acid sequence, 380 residues long: MAPNIRKSHPLVKMINNSLIDLPTPPNISIWWNFGSLLGICLATQILTGLLLAMHYTADTTLAFSSVAHTCRNVQYGWLIRNLHANGASLFFICIYMHIGRGIYYGSYLYKETWNTGIILLLTLMATAFVGYVLPWGQMSFWGATVITNLFSAIPYIGQTLVEWAWGGFSVDNPTLTRFFALHFLLPFLIAGLTLIHLTFLHESGSNNPLGITSNCDKIPFHPYYSLKDILGFMLMYLPLMTLALFTPNLLGDPENFTPANPLVTPPHIKPEWYFLFAYAILRSIPNKLGGVLALAASVLILFLSPLLHKSKQRTMTFRPLSQSLFWLLVTNLLILTWVGSQPVEHPFIIIGQLASLSYFTTLLILLPLTGALENKILNY.

4 helical membrane passes run 34 to 54 (FGSL…LLAM), 78 to 99 (WLIR…YMHI), 114 to 134 (WNTG…GYVL), and 179 to 199 (FFAL…IHLT). Residues histidine 84 and histidine 98 each contribute to the heme b site. Heme b-binding residues include histidine 183 and histidine 197. Histidine 202 is a binding site for a ubiquinone. The next 4 membrane-spanning stretches (helical) occupy residues 227-247 (LKDI…ALFT), 289-309 (LGGV…PLLH), 321-341 (LSQS…WVGS), and 348-368 (FIII…ILLP).

The protein belongs to the cytochrome b family. The cytochrome bc1 complex contains 11 subunits: 3 respiratory subunits (MT-CYB, CYC1 and UQCRFS1), 2 core proteins (UQCRC1 and UQCRC2) and 6 low-molecular weight proteins (UQCRH/QCR6, UQCRB/QCR7, UQCRQ/QCR8, UQCR10/QCR9, UQCR11/QCR10 and a cleavage product of UQCRFS1). This cytochrome bc1 complex then forms a dimer. Heme b serves as cofactor.

It is found in the mitochondrion inner membrane. Functionally, component of the ubiquinol-cytochrome c reductase complex (complex III or cytochrome b-c1 complex) that is part of the mitochondrial respiratory chain. The b-c1 complex mediates electron transfer from ubiquinol to cytochrome c. Contributes to the generation of a proton gradient across the mitochondrial membrane that is then used for ATP synthesis. This chain is Cytochrome b (MT-CYB), found in Falco peregrinus (Peregrine falcon).